A 198-amino-acid polypeptide reads, in one-letter code: Small ribosomal subunit protein uS4 (198 aa).

The S4 RNA-binding domain maps to 91 to 154; the sequence is SRLDNVVYRL…KNLNIVQEAV (64 aa).

It belongs to the universal ribosomal protein uS4 family. As to quaternary structure, part of the 30S ribosomal subunit. Contacts protein S5. The interaction surface between S4 and S5 is involved in control of translational fidelity.

In terms of biological role, one of the primary rRNA binding proteins, it binds directly to 16S rRNA where it nucleates assembly of the body of the 30S subunit. With S5 and S12 plays an important role in translational accuracy. In Onion yellows phytoplasma (strain OY-M), this protein is Small ribosomal subunit protein uS4.